The sequence spans 144 residues: MSSEDLAEIPQLQKLSIPHGFQNKEAASSPTPSITLSQVPDLQPGSQLFTEIHLAKIEKMFEEDINSTGALGMDAFIKAMKKVLSSVSDEMLKELFLKVDSDCEGFVTWQKYVDYMMREFQGKEDMRKSQYRLHFYLPMTVVPL.

EF-hand domains lie at 52–86 (IHLA…VLSS) and 87–122 (VSDE…EFQG).

This Homo sapiens (Human) protein is EF-hand calcium-binding domain-containing protein 8 (EFCAB8).